Here is a 110-residue protein sequence, read N- to C-terminus: Class I hydrophobin 2 (110 aa).

The N-terminal stretch at 1 to 19 is a signal peptide; it reads MFARAASVFVLSLPILATA. 4 disulfides stabilise this stretch: Cys-29–Cys-89, Cys-36–Cys-83, Cys-37–Cys-70, and Cys-90–Cys-103.

Belongs to the fungal hydrophobin family. As to quaternary structure, self-assembles to form functional amyloid fibrils called rodlets. Self-assembly into fibrillar rodlets occurs spontaneously at hydrophobic:hydrophilic interfaces and the rodlets further associate laterally to form amphipathic monolayers.

The protein localises to the secreted. The protein resides in the cell wall. In terms of biological role, aerial growth, conidiation, and dispersal of filamentous fungi in the environment rely upon a capability of their secreting small amphipathic proteins called hydrophobins (HPBs) with low sequence identity. Class I can self-assemble into an outermost layer of rodlet bundles on aerial cell surfaces, conferring cellular hydrophobicity that supports fungal growth, development and dispersal; whereas Class II form highly ordered films at water-air interfaces through intermolecular interactions but contribute nothing to the rodlet structure. Pnh2 is a class I hydrophobin that might be involved in the attachment of the hydrophilic wall of hyphae to the hydrophobic surface of wood under inorganic phosphate (Pi)-deficient conditions and enable the mycelium to degrade efficiently the components of wood and to acquire nutrients containing Pi. The polypeptide is Class I hydrophobin 2 (Pholiota nameko).